Consider the following 236-residue polypeptide: 2-phospho-L-lactate guanylyltransferase (236 aa).

Belongs to the CofC family. In terms of assembly, homodimer.

The enzyme catalyses (2S)-2-phospholactate + GTP + H(+) = (2S)-lactyl-2-diphospho-5'-guanosine + diphosphate. The protein operates within cofactor biosynthesis; coenzyme F420 biosynthesis. In terms of biological role, guanylyltransferase that catalyzes the activation of (2S)-2-phospholactate (2-PL) as (2S)-lactyl-2-diphospho-5'-guanosine, via the condensation of 2-PL with GTP. It is involved in the biosynthesis of coenzyme F420, a hydride carrier cofactor. This Natrialba magadii (strain ATCC 43099 / DSM 3394 / CCM 3739 / CIP 104546 / IAM 13178 / JCM 8861 / NBRC 102185 / NCIMB 2190 / MS3) (Natronobacterium magadii) protein is 2-phospho-L-lactate guanylyltransferase.